A 64-amino-acid chain; its full sequence is Long neurotoxin MS5 (64 aa).

Disulfide bonds link Cys-3–Cys-24, Cys-6–Cys-11, Cys-17–Cys-41, Cys-45–Cys-57, and Cys-58–Cys-63.

It belongs to the three-finger toxin family. Ancestral subfamily. In terms of tissue distribution, expressed by the venom gland.

It is found in the secreted. Produces peripheral paralysis by blocking neuromuscular transmission at the postsynaptic site. Very weak inhibitor of the endogenous nicotinic acetylcholine receptors (nAChR) in the human rhabdomyosarcoma TE 671 cell line. This neurotoxin is lethal to zebrafish by injection at the back of the dorsolateral region, but is not toxic to mice by intraperitoneal injection. This is Long neurotoxin MS5 from Micrurus surinamensis (Surinam coral snake).